We begin with the raw amino-acid sequence, 129 residues long: Ergosterol biosynthetic protein 28 (129 aa).

The next 4 membrane-spanning stretches (helical) occupy residues 4–24, 46–66, 71–91, and 96–116; these read LGYW…FGFF, TFGV…FNLE, YLAT…EYLF, and TIAN…WMLL.

It belongs to the ERG28 family.

It is found in the endoplasmic reticulum membrane. This is Ergosterol biosynthetic protein 28 from Arabidopsis thaliana (Mouse-ear cress).